The chain runs to 207 residues: Galactoside O-acetyltransferase (207 aa).

Asn-87 lines the acetyl-CoA pocket. Catalysis depends on His-117, which acts as the Proton donor/acceptor. Acetyl-CoA contacts are provided by residues Ala-144, Ala-162, 167–168 (TK), and Arg-185.

The protein belongs to the transferase hexapeptide repeat family. Homotrimer.

It localises to the cytoplasm. The catalysed reaction is a beta-D-galactoside + acetyl-CoA = a 6-acetyl-beta-D-galactoside + CoA. The polypeptide is Galactoside O-acetyltransferase (lacA) (Lactococcus lactis subsp. lactis (strain IL1403) (Streptococcus lactis)).